A 543-amino-acid chain; its full sequence is Hydroxylamine reductase (543 aa).

[4Fe-4S] cluster is bound by residues cysteine 3, cysteine 6, cysteine 15, and cysteine 21. 8 residues coordinate hybrid [4Fe-2O-2S] cluster: histidine 239, glutamate 263, cysteine 307, cysteine 398, cysteine 426, cysteine 451, glutamate 486, and lysine 488. Residue cysteine 398 is modified to Cysteine persulfide.

Belongs to the HCP family. It depends on [4Fe-4S] cluster as a cofactor. Requires hybrid [4Fe-2O-2S] cluster as cofactor.

It localises to the cytoplasm. It catalyses the reaction A + NH4(+) + H2O = hydroxylamine + AH2 + H(+). Its function is as follows. Catalyzes the reduction of hydroxylamine to form NH(3) and H(2)O. This Methanococcus vannielii (strain ATCC 35089 / DSM 1224 / JCM 13029 / OCM 148 / SB) protein is Hydroxylamine reductase.